The chain runs to 363 residues: Anhydro-N-acetylmuramic acid kinase (363 aa).

Residue Gly10–Asp17 participates in ATP binding.

Belongs to the anhydro-N-acetylmuramic acid kinase family.

The catalysed reaction is 1,6-anhydro-N-acetyl-beta-muramate + ATP + H2O = N-acetyl-D-muramate 6-phosphate + ADP + H(+). It participates in amino-sugar metabolism; 1,6-anhydro-N-acetylmuramate degradation. Its pathway is cell wall biogenesis; peptidoglycan recycling. Functionally, catalyzes the specific phosphorylation of 1,6-anhydro-N-acetylmuramic acid (anhMurNAc) with the simultaneous cleavage of the 1,6-anhydro ring, generating MurNAc-6-P. Is required for the utilization of anhMurNAc either imported from the medium or derived from its own cell wall murein, and thus plays a role in cell wall recycling. In Pseudomonas fluorescens (strain Pf0-1), this protein is Anhydro-N-acetylmuramic acid kinase.